Consider the following 202-residue polypeptide: Small ribosomal subunit protein uS4c (202 aa).

In terms of domain architecture, S4 RNA-binding spans 90–152 (MRLDNVIFRL…RKSESIINKN (63 aa)).

This sequence belongs to the universal ribosomal protein uS4 family. As to quaternary structure, part of the 30S ribosomal subunit. Contacts protein S5. The interaction surface between S4 and S5 is involved in control of translational fidelity.

The protein resides in the plastid. Its subcellular location is the chloroplast. Functionally, one of the primary rRNA binding proteins, it binds directly to 16S rRNA where it nucleates assembly of the body of the 30S subunit. Its function is as follows. With S5 and S12 plays an important role in translational accuracy. The sequence is that of Small ribosomal subunit protein uS4c (rps4) from Dendrohypopterygium filiculiforme (Moss).